The following is a 424-amino-acid chain: Arginine biosynthesis bifunctional protein ArgJ (424 aa).

6 residues coordinate substrate: Thr-172, Lys-198, Thr-209, Glu-296, Asn-419, and Ser-424. The Nucleophile role is filled by Thr-209.

This sequence belongs to the ArgJ family. Heterotetramer of two alpha and two beta chains.

The protein resides in the cytoplasm. It carries out the reaction N(2)-acetyl-L-ornithine + L-glutamate = N-acetyl-L-glutamate + L-ornithine. It catalyses the reaction L-glutamate + acetyl-CoA = N-acetyl-L-glutamate + CoA + H(+). It participates in amino-acid biosynthesis; L-arginine biosynthesis; L-ornithine and N-acetyl-L-glutamate from L-glutamate and N(2)-acetyl-L-ornithine (cyclic): step 1/1. It functions in the pathway amino-acid biosynthesis; L-arginine biosynthesis; N(2)-acetyl-L-ornithine from L-glutamate: step 1/4. In terms of biological role, catalyzes two activities which are involved in the cyclic version of arginine biosynthesis: the synthesis of N-acetylglutamate from glutamate and acetyl-CoA as the acetyl donor, and of ornithine by transacetylation between N(2)-acetylornithine and glutamate. The chain is Arginine biosynthesis bifunctional protein ArgJ from Gluconobacter oxydans (strain 621H) (Gluconobacter suboxydans).